Here is a 766-residue protein sequence, read N- to C-terminus: Single-minded homolog 1 (766 aa).

Residues 1–53 enclose the bHLH domain; that stretch reads MKEKSKNAARTRREKENSEFYELAKLLPLPSAITSQLDKASIIRLTTSYLKMR. 2 PAS domains span residues 77–147 and 218–288; these read GREL…QPYH and PPSA…LVKG. Positions 292-335 constitute a PAC domain; the sequence is TKYYRFLAKHGGWVWVQSYATIVHNSRSSRPHCIVSVNYVLTDT. The 431-residue stretch at 336 to 766 folds into the Single-minded C-terminal domain; that stretch reads EYKGLQLSLD…GTSVIITNGS (431 aa). The span at 353–365 shows a compositional bias: polar residues; sequence AFSYTSSSTPTMT. Disordered regions lie at residues 353 to 431 and 528 to 563; these read AFSY…SQHD and WDEDSVVSSPDPGSASESGDRYRTEQYQSSPHEPSK. The Nuclear localization signal signature appears at 368-387; the sequence is RKGAKSRLSSSKSKSRTSPY. The span at 373–385 shows a compositional bias: low complexity; the sequence is SRLSSSKSKSRTS. The segment covering 394–404 has biased composition (basic and acidic residues); that stretch reads HTERSESDHDS.

Efficient DNA binding requires dimerization with another bHLH protein. Heterodimer; forms a heterodimer with ARNT, ARNT2.

It localises to the nucleus. In terms of biological role, transcriptional factor that may have pleiotropic effects during embryogenesis and in the adult. In Pan paniscus (Pygmy chimpanzee), this protein is Single-minded homolog 1 (SIM1).